Here is a 587-residue protein sequence, read N- to C-terminus: Phosphomethylpyrimidine synthase (587 aa).

Substrate contacts are provided by residues Asn-218, Met-247, Tyr-276, His-312, 332–334, 373–376, and Glu-412; these read SRG and DGLR. Residue His-416 coordinates Zn(2+). Tyr-439 is a substrate binding site. Position 480 (His-480) interacts with Zn(2+). 3 residues coordinate [4Fe-4S] cluster: Cys-560, Cys-563, and Cys-568.

Belongs to the ThiC family. It depends on [4Fe-4S] cluster as a cofactor.

It catalyses the reaction 5-amino-1-(5-phospho-beta-D-ribosyl)imidazole + S-adenosyl-L-methionine = 4-amino-2-methyl-5-(phosphooxymethyl)pyrimidine + CO + 5'-deoxyadenosine + formate + L-methionine + 3 H(+). It functions in the pathway cofactor biosynthesis; thiamine diphosphate biosynthesis. Its function is as follows. Catalyzes the synthesis of the hydroxymethylpyrimidine phosphate (HMP-P) moiety of thiamine from aminoimidazole ribotide (AIR) in a radical S-adenosyl-L-methionine (SAM)-dependent reaction. The chain is Phosphomethylpyrimidine synthase from Porphyromonas gingivalis (strain ATCC 33277 / DSM 20709 / CIP 103683 / JCM 12257 / NCTC 11834 / 2561).